Reading from the N-terminus, the 61-residue chain is Beta-defensin 133 (61 aa).

Positions 1–23 (MKIHVFLFVLFFFLVPIATRVKC) are cleaved as a signal peptide. 2 cysteine pairs are disulfide-bonded: Cys-31–Cys-59 and Cys-38–Cys-52.

It belongs to the beta-defensin family.

It is found in the secreted. Functionally, has antibacterial activity. In Homo sapiens (Human), this protein is Beta-defensin 133 (DEFB133).